We begin with the raw amino-acid sequence, 79 residues long: Small ribosomal subunit protein uS17 (79 aa).

Belongs to the universal ribosomal protein uS17 family. As to quaternary structure, part of the 30S ribosomal subunit.

Functionally, one of the primary rRNA binding proteins, it binds specifically to the 5'-end of 16S ribosomal RNA. This Orientia tsutsugamushi (strain Ikeda) (Rickettsia tsutsugamushi) protein is Small ribosomal subunit protein uS17.